Here is a 413-residue protein sequence, read N- to C-terminus: Zona pellucida-like domain-containing protein 1 (413 aa).

The signal sequence occupies residues 1 to 19 (MEQICLIILLISKALSVGA). Gln20 bears the Pyrrolidone carboxylic acid mark. The Extracellular portion of the chain corresponds to 20–370 (QFNGYNCDAN…PVFRMNTVTS (351 aa)). A ZP domain is found at 43 to 320 (YCGVQTITLK…PICGSRKKRD (278 aa)). Intrachain disulfides connect Cys44–Cys155 and Cys79–Cys104. Asn85, Asn121, Asn129, Asn164, Asn181, and Asn194 each carry an N-linked (GlcNAc...) asparagine glycan. Cystine bridges form between Cys235–Cys296 and Cys255–Cys313. An N-linked (GlcNAc...) asparagine glycan is attached at Asn351. Residues 371-391 (ALISGIIILGVMSLCFFILSL) traverse the membrane as a helical segment. Residues 392-413 (TLLKGKRAPPTILSGARNPAFN) lie on the Cytoplasmic side of the membrane.

In terms of processing, proteolytically cleaved before the transmembrane segment to yield the secreted form found in the extracellular matrix of the cupula. Post-translationally, N-glycosylated. As to expression, detected in the acellular cupulae of the vestibular organ, and also in support cells adjacent to the cupula (at protein level).

It is found in the cytoplasmic vesicle membrane. It localises to the secreted. Its subcellular location is the extracellular space. The protein localises to the extracellular matrix. Its function is as follows. Glycoprotein which is a component of the gelatinous extracellular matrix in the cupulae of the vestibular organ. The sequence is that of Zona pellucida-like domain-containing protein 1 from Salmo salar (Atlantic salmon).